The following is a 333-amino-acid chain: tRNA N6-adenosine threonylcarbamoyltransferase (333 aa).

Fe cation is bound by residues histidine 111 and histidine 115. Substrate contacts are provided by residues 134 to 138 (LVSGG), aspartate 167, glycine 180, and asparagine 272. Aspartate 300 contacts Fe cation.

The protein belongs to the KAE1 / TsaD family. Fe(2+) serves as cofactor.

The protein localises to the cytoplasm. It carries out the reaction L-threonylcarbamoyladenylate + adenosine(37) in tRNA = N(6)-L-threonylcarbamoyladenosine(37) in tRNA + AMP + H(+). In terms of biological role, required for the formation of a threonylcarbamoyl group on adenosine at position 37 (t(6)A37) in tRNAs that read codons beginning with adenine. Is involved in the transfer of the threonylcarbamoyl moiety of threonylcarbamoyl-AMP (TC-AMP) to the N6 group of A37, together with TsaE and TsaB. TsaD likely plays a direct catalytic role in this reaction. This chain is tRNA N6-adenosine threonylcarbamoyltransferase, found in Legionella pneumophila (strain Lens).